Reading from the N-terminus, the 409-residue chain is Testis-expressed protein 13A (409 aa).

Residues 92 to 408 form a required for repression of transcription region; that stretch reads WLHGFAKLHK…CGKGIWLQKP (317 aa). The segment at 347–374 is disordered; that stretch reads GGPHRIDHQEHPRDRRYSEPHQQRPPVY. The span at 348-368 shows a compositional bias: basic and acidic residues; it reads GPHRIDHQEHPRDRRYSEPHQ. The segment at 376–400 adopts a RanBP2-type zinc-finger fold; that stretch reads RPGDWDCPWCNAVNFSRRDTCFDCG. C382, C385, C396, and C399 together coordinate Zn(2+).

It belongs to the TEX13 family. In terms of assembly, interacts with CNOT1; the interaction may inhibit CNOT1 binding to mRNA and subsequently CNOT1-mediated mRNA degradation. In terms of tissue distribution, testis specific.

In terms of biological role, binds to ssRNA containing the consensus sequence 5'-AGGUAA-3'. Plays a role in transcriptional repression. Required for rapid sperm motility and timely degradation of mRNA via its interaction with CNOT1. In Homo sapiens (Human), this protein is Testis-expressed protein 13A.